The sequence spans 155 residues: Small ribosomal subunit protein uS7 (155 aa).

Belongs to the universal ribosomal protein uS7 family. Part of the 30S ribosomal subunit. Contacts proteins S9 and S11.

In terms of biological role, one of the primary rRNA binding proteins, it binds directly to 16S rRNA where it nucleates assembly of the head domain of the 30S subunit. Is located at the subunit interface close to the decoding center, probably blocks exit of the E-site tRNA. The sequence is that of Small ribosomal subunit protein uS7 from Chlorobium luteolum (strain DSM 273 / BCRC 81028 / 2530) (Pelodictyon luteolum).